The following is a 209-amino-acid chain: Uracil phosphoribosyltransferase (209 aa).

5-phospho-alpha-D-ribose 1-diphosphate-binding positions include Arg-79, Arg-104, and 131–139 (DPMLATGAS). Uracil-binding positions include Ile-194 and 199–201 (GDA). Asp-200 lines the 5-phospho-alpha-D-ribose 1-diphosphate pocket.

The protein belongs to the UPRTase family. Requires Mg(2+) as cofactor.

It catalyses the reaction UMP + diphosphate = 5-phospho-alpha-D-ribose 1-diphosphate + uracil. Its pathway is pyrimidine metabolism; UMP biosynthesis via salvage pathway; UMP from uracil: step 1/1. With respect to regulation, allosterically activated by GTP. Catalyzes the conversion of uracil and 5-phospho-alpha-D-ribose 1-diphosphate (PRPP) to UMP and diphosphate. The polypeptide is Uracil phosphoribosyltransferase (Staphylococcus carnosus (strain TM300)).